The primary structure comprises 291 residues: uncharacterized protein (291 aa).

This is an uncharacterized protein from Acanthamoeba polyphaga mimivirus (APMV).